The following is a 294-amino-acid chain: NADH-cytochrome b5 reductase 1 (294 aa).

The helical transmembrane segment at 13–33 threads the bilayer; the sequence is PHASFLGGLVVAAILGLFIFF. The region spanning 44 to 147 is the FAD-binding FR-type domain; sequence VEWRSFKLVD…KGPKGKFVYT (104 aa). FAD contacts are provided by residues 127-142 and 153-185; these read SLLT…GPKG and HLVM…RLSL.

It belongs to the flavoprotein pyridine nucleotide cytochrome reductase family. Monomer. Component of the 2-(3-amino-3-carboxypropyl)histidine synthase complex composed of DPH1, DPH2, DPH3 and a NADH-dependent reductase, predominantly CBR1. It depends on FAD as a cofactor.

It localises to the mitochondrion outer membrane. The catalysed reaction is 2 Fe(III)-[cytochrome b5] + NADH = 2 Fe(II)-[cytochrome b5] + NAD(+) + H(+). It carries out the reaction 2 Fe(3+)-[Dph3] + NADH = 2 Fe(2+)-[Dph3] + NAD(+) + H(+). The protein operates within protein modification; peptidyl-diphthamide biosynthesis. Functionally, NADH-dependent reductase for DPH3 and cytochrome b5. Required for the first step of diphthamide biosynthesis, a post-translational modification of histidine which occurs in elongation factor 2. DPH1 and DPH2 transfer a 3-amino-3-carboxypropyl (ACP) group from S-adenosyl-L-methionine (SAM) to a histidine residue, the reaction is assisted by a reduction system comprising DPH3 and a NADH-dependent reductase, predominantly CBR1. By reducing DPH3, also involved in the formation of the tRNA wobble base modification mcm5s 2U (5-methoxycarbonylmethyl-2-thiouridine), mediated by the elongator complex. The cytochrome b5/NADH cytochrome b5 reductase electron transfer system supports the catalytic activity of several sterol biosynthetic enzymes. The sequence is that of NADH-cytochrome b5 reductase 1 (CBR1) from Cryptococcus neoformans var. neoformans serotype D (strain B-3501A) (Filobasidiella neoformans).